The chain runs to 373 residues: NAD-dependent protein deacylase SRT2 (373 aa).

Residues 1-47 (MNMRRVFGGVSTDLFPSRSMYRPLQSGGNLVMLFKGCRRFVRTTCRV) constitute a mitochondrion transit peptide. The Deacetylase sirtuin-type domain maps to 75–373 (DPPNMEDIHK…DVGSLSVPAL (299 aa)). Residues 100-120 (GAGV…GAYS) and 179-182 (QNVD) each bind NAD(+). Catalysis depends on His-196, which acts as the Proton acceptor. 4 residues coordinate Zn(2+): Cys-204, Cys-207, Cys-271, and Cys-274. NAD(+) contacts are provided by residues 311–313 (GSS), 337–339 (NIG), and Val-355.

Belongs to the sirtuin family. Class II subfamily. In terms of assembly, binds to the promoter region of genes influenced by ethylene. Interacts with ENAP1; this interaction is enhanced in the presence of ethylene. Zn(2+) is required as a cofactor.

It localises to the mitochondrion matrix. The protein resides in the nucleus. It catalyses the reaction N(6)-acetyl-L-lysyl-[protein] + NAD(+) + H2O = 2''-O-acetyl-ADP-D-ribose + nicotinamide + L-lysyl-[protein]. Functionally, NAD-dependent protein deacylase. Catalyzes the NAD-dependent hydrolysis of acyl groups from lysine residues. Involved in responses to ethylene leading to the transcriptional repression of some ethylene-responsive genes via the regulation of histone acetylation H3K9Ac. Negatively regulates plant basal defense against plant pathogens, possibly by suppressing salicylic acid biosynthesis. The protein is NAD-dependent protein deacylase SRT2 of Arabidopsis thaliana (Mouse-ear cress).